Consider the following 339-residue polypeptide: MEITLFDPIDAHLHVREGVLLKAVLKYSSEPFSAAVIMPNLSKPLIDTQITLEYEGEILKNSSNFKPLMSLYFNDGLTLEELQHAKHQGIKFLKLYPKGMTTNAQNGTSDLLGEKTLEILEDAQKLGFILCIHAEQAGFCLDKEFLCHSVLETFAHSFPKLKIIIEHLSDWRSIALIEKHDNLYATLTLHHISMTLDDLLGGSLNPHCFCKPLIKTQKDQERLLSLALKAHPKISFGSDSAPHVISKKHSANIPAGIFSAPILLPALCELFEKHNALENLQAFISDNAKKIYTLDNLPSKKVRLSKKPFIVPTHTLCLNEKIAILREGETLSWNIQEIA.

Positions 12 and 14 each coordinate Zn(2+). Substrate-binding positions include 14-16 and asparagine 40; that span reads HVR. Lysine 94, histidine 133, histidine 167, and aspartate 239 together coordinate Zn(2+). N6-carboxylysine is present on lysine 94. Substrate is bound at residue histidine 133. The active site involves aspartate 239. Substrate is bound by residues histidine 243 and alanine 255.

This sequence belongs to the metallo-dependent hydrolases superfamily. DHOase family. Class II DHOase subfamily. In terms of assembly, homodimer. It depends on Zn(2+) as a cofactor.

It carries out the reaction (S)-dihydroorotate + H2O = N-carbamoyl-L-aspartate + H(+). It participates in pyrimidine metabolism; UMP biosynthesis via de novo pathway; (S)-dihydroorotate from bicarbonate: step 3/3. Catalyzes the reversible cyclization of carbamoyl aspartate to dihydroorotate. The protein is Dihydroorotase of Helicobacter acinonychis (strain Sheeba).